The sequence spans 253 residues: Cyclin-C1-1 (253 aa).

Belongs to the cyclin family. Cyclin C subfamily.

The polypeptide is Cyclin-C1-1 (CYCC1-1) (Arabidopsis thaliana (Mouse-ear cress)).